The primary structure comprises 566 residues: Bacillolysin (566 aa).

The N-terminal stretch at 1–27 (MKKKSLALVLATGMAVTTFGGTGSAFA) is a signal peptide. A propeptide spans 28–249 (DSKNVLSTKK…KQDAKAVVKP (222 aa)) (activation peptide). Ca(2+) contacts are provided by aspartate 307, aspartate 309, valine 311, and aspartate 388. Histidine 392 serves as a coordination point for Zn(2+). Glutamate 393 is an active-site residue. Positions 396 and 416 each coordinate Zn(2+). Positions 427, 433, 435, 437, 440, 443, 444, 447, and 450 each coordinate Ca(2+). Histidine 481 functions as the Proton donor in the catalytic mechanism.

Belongs to the peptidase M4 family. Ca(2+) is required as a cofactor. The cofactor is Zn(2+).

It localises to the secreted. It catalyses the reaction Similar, but not identical, to that of thermolysin.. Its function is as follows. Extracellular zinc metalloprotease. The sequence is that of Bacillolysin (npr) from Bacillus cereus.